The primary structure comprises 189 residues: Endoribonuclease YbeY (189 aa).

The segment covering 1–10 (MKERSSSPGT) has biased composition (polar residues). A disordered region spans residues 1 to 23 (MKERSSSPGTPDSGRRARPKPAK). Residues H141, H145, and H151 each coordinate Zn(2+).

Belongs to the endoribonuclease YbeY family. It depends on Zn(2+) as a cofactor.

Its subcellular location is the cytoplasm. Functionally, single strand-specific metallo-endoribonuclease involved in late-stage 70S ribosome quality control and in maturation of the 3' terminus of the 16S rRNA. The polypeptide is Endoribonuclease YbeY (Nitrosospira multiformis (strain ATCC 25196 / NCIMB 11849 / C 71)).